The sequence spans 124 residues: UPF0102 protein Noc_0355 (124 aa).

This sequence belongs to the UPF0102 family.

The protein is UPF0102 protein Noc_0355 of Nitrosococcus oceani (strain ATCC 19707 / BCRC 17464 / JCM 30415 / NCIMB 11848 / C-107).